Consider the following 341-residue polypeptide: Tryptophan--tRNA ligase (341 aa).

ATP is bound by residues 11 to 13 and 19 to 20; these read RPT and GH. Residues 12–20 carry the 'HIGH' region motif; it reads PTGKLHIGH. Asp-140 contacts L-tryptophan. ATP contacts are provided by residues 152–154, Leu-194, and 202–206; these read GND and KMSKS. Residues 202–206 carry the 'KMSKS' region motif; it reads KMSKS.

This sequence belongs to the class-I aminoacyl-tRNA synthetase family. As to quaternary structure, homodimer.

The protein localises to the cytoplasm. It catalyses the reaction tRNA(Trp) + L-tryptophan + ATP = L-tryptophyl-tRNA(Trp) + AMP + diphosphate + H(+). Catalyzes the attachment of tryptophan to tRNA(Trp). The protein is Tryptophan--tRNA ligase of Lactococcus lactis subsp. lactis (strain IL1403) (Streptococcus lactis).